Here is a 379-residue protein sequence, read N- to C-terminus: MPADDYPVTELTKALIARPSVTPLDEGCQTLMAERLSAIGFNIEPMVFEDTTNMWARRGNEGPVFCFAGHTDVVPTGDVSRWHTPPFVPTIIDGYLYGRGAADMKGSLAAMVIATERFVAKHPDHNGSIAFLITSDEEGPFINGTTRVIDTLEARNEKITWALVGEPSSTLKLGDVVKNGRRGSLTGNLTVKGIQGHVAYPHLADNPIHKAAPFLAELSQMHWDNGNEFFPPTSFQIANINGGTGASNVIPGALDVMFNFRYSTEVTADILIERVETLLKAHELDYDISWIFNGLPFLTGDGPLLDATRIAIRQVTGYETDPQTTGGTSDGRFIAPTGAKVLELGPVNATIHKVNECVKVDDLEQLALCYEVILEQLLC.

His-70 contributes to the Zn(2+) binding site. Asp-72 is a catalytic residue. Asp-103 is a binding site for Zn(2+). Residue Glu-137 is the Proton acceptor of the active site. 3 residues coordinate Zn(2+): Glu-138, Glu-166, and His-352.

Belongs to the peptidase M20A family. DapE subfamily. In terms of assembly, homodimer. Requires Zn(2+) as cofactor. Co(2+) is required as a cofactor.

The catalysed reaction is N-succinyl-(2S,6S)-2,6-diaminopimelate + H2O = (2S,6S)-2,6-diaminopimelate + succinate. The protein operates within amino-acid biosynthesis; L-lysine biosynthesis via DAP pathway; LL-2,6-diaminopimelate from (S)-tetrahydrodipicolinate (succinylase route): step 3/3. Its function is as follows. Catalyzes the hydrolysis of N-succinyl-L,L-diaminopimelic acid (SDAP), forming succinate and LL-2,6-diaminopimelate (DAP), an intermediate involved in the bacterial biosynthesis of lysine and meso-diaminopimelic acid, an essential component of bacterial cell walls. The polypeptide is Succinyl-diaminopimelate desuccinylase (Shewanella baltica (strain OS223)).